Consider the following 253-residue polypeptide: Small ribosomal subunit protein uS2 (253 aa).

It belongs to the universal ribosomal protein uS2 family.

This Parvibaculum lavamentivorans (strain DS-1 / DSM 13023 / NCIMB 13966) protein is Small ribosomal subunit protein uS2.